A 224-amino-acid polypeptide reads, in one-letter code: Metalloproteinase inhibitor 4 (224 aa).

A signal peptide spans 1-29; the sequence is MPWSPLAALSWALVLRLLALLWPPGRGEA. Cys30 contributes to the Zn(2+) binding site. 2 involved in metalloproteinase-binding regions span residues 30–33 and 99–100; these read CSCA and SS. 6 disulfides stabilise this stretch: Cys30/Cys102, Cys32/Cys131, Cys42/Cys156, Cys158/Cys205, Cys163/Cys168, and Cys176/Cys197. In terms of domain architecture, NTR spans 30 to 156; the sequence is CSCAPAHPQQ…SLNHHYHQNC (127 aa).

Belongs to the protease inhibitor I35 (TIMP) family. Expressed in retina, smooth muscle, skin, pancreas, skeletal muscle, heart, brain, lung, kidney and testis. Not found in cartilage, spleen and liver.

Its subcellular location is the secreted. Functionally, complexes with metalloproteinases (such as collagenases) and irreversibly inactivates them by binding to their catalytic zinc cofactor. This chain is Metalloproteinase inhibitor 4 (Timp4), found in Rattus norvegicus (Rat).